A 422-amino-acid polypeptide reads, in one-letter code: GTPase Obg (422 aa).

The Obg domain maps to 1-158 (MFYDRARIFV…RWLDLELKLL (158 aa)). The 171-residue stretch at 159–329 (ADVGLVGFPN…LVYRVSALLE (171 aa)) folds into the OBG-type G domain. Residues 165–172 (GFPNAGKS), 190–194 (FTTIT), 212–215 (DIPG), 282–285 (NKMD), and 310–312 (SAV) each bind GTP. Mg(2+) contacts are provided by S172 and T192. The OCT domain maps to 337 to 422 (VPEALERPVI…IGDYEFEYVE (86 aa)).

The protein belongs to the TRAFAC class OBG-HflX-like GTPase superfamily. OBG GTPase family. Monomer. Requires Mg(2+) as cofactor.

The protein localises to the cytoplasm. In terms of biological role, an essential GTPase which binds GTP, GDP and possibly (p)ppGpp with moderate affinity, with high nucleotide exchange rates and a fairly low GTP hydrolysis rate. Plays a role in control of the cell cycle, stress response, ribosome biogenesis and in those bacteria that undergo differentiation, in morphogenesis control. The polypeptide is GTPase Obg (Pelotomaculum thermopropionicum (strain DSM 13744 / JCM 10971 / SI)).